A 374-amino-acid chain; its full sequence is Queuine tRNA-ribosyltransferase (374 aa).

D89 serves as the catalytic Proton acceptor. Residues 89–93 (DSGGF), D143, Q187, and G214 each bind substrate. Positions 245–251 (GVGKPED) are RNA binding. The active-site Nucleophile is the D264. Residues 269-273 (TRNAR) form an RNA binding; important for wobble base 34 recognition region. Residues C302, C304, C307, and H333 each contribute to the Zn(2+) site.

The protein belongs to the queuine tRNA-ribosyltransferase family. As to quaternary structure, homodimer. Within each dimer, one monomer is responsible for RNA recognition and catalysis, while the other monomer binds to the replacement base PreQ1. Requires Zn(2+) as cofactor.

It catalyses the reaction 7-aminomethyl-7-carbaguanine + guanosine(34) in tRNA = 7-aminomethyl-7-carbaguanosine(34) in tRNA + guanine. The protein operates within tRNA modification; tRNA-queuosine biosynthesis. In terms of biological role, catalyzes the base-exchange of a guanine (G) residue with the queuine precursor 7-aminomethyl-7-deazaguanine (PreQ1) at position 34 (anticodon wobble position) in tRNAs with GU(N) anticodons (tRNA-Asp, -Asn, -His and -Tyr). Catalysis occurs through a double-displacement mechanism. The nucleophile active site attacks the C1' of nucleotide 34 to detach the guanine base from the RNA, forming a covalent enzyme-RNA intermediate. The proton acceptor active site deprotonates the incoming PreQ1, allowing a nucleophilic attack on the C1' of the ribose to form the product. After dissociation, two additional enzymatic reactions on the tRNA convert PreQ1 to queuine (Q), resulting in the hypermodified nucleoside queuosine (7-(((4,5-cis-dihydroxy-2-cyclopenten-1-yl)amino)methyl)-7-deazaguanosine). This Shewanella baltica (strain OS185) protein is Queuine tRNA-ribosyltransferase.